Reading from the N-terminus, the 1657-residue chain is A disintegrin and metalloproteinase with thrombospondin motifs 7 (1657 aa).

The signal sequence occupies residues 1 to 20; that stretch reads MHRGPSLLLILCALASRVLG. A propeptide spanning residues 21 to 220 is cleaved from the precursor; that stretch reads PASGLVTEGR…QQQQKRRQQR (200 aa). N-linked (GlcNAc...) asparagine glycosylation is present at asparagine 84. The interval 165-221 is disordered; sequence PGHAQPHVVYKHQGSRKQAQQGDSRPSGTCGMQVPPDLEQQREHWEQQQQKRRQQRS. Over residues 180–191 the composition is skewed to polar residues; that stretch reads RKQAQQGDSRPS. The Cysteine switch signature appears at 192 to 199; that stretch reads GTCGMQVP. A Zn(2+)-binding site is contributed by cysteine 194. The Peptidase M12B domain occupies 226–437; the sequence is KWVETLVVAD…GWGLCLDDRP (212 aa). 11 disulfides stabilise this stretch: cysteine 302–cysteine 356, cysteine 331–cysteine 338, cysteine 350–cysteine 432, cysteine 389–cysteine 416, cysteine 459–cysteine 482, cysteine 470–cysteine 488, cysteine 477–cysteine 507, cysteine 501–cysteine 512, cysteine 535–cysteine 572, cysteine 539–cysteine 577, and cysteine 550–cysteine 562. Position 372 (histidine 372) interacts with Zn(2+). The active site involves glutamate 373. Zn(2+) contacts are provided by histidine 376 and histidine 382. One can recognise a Disintegrin domain in the interval 447–522; the sequence is VLPGVLYDVN…VPEGFQPEAV (76 aa). The 56-residue stretch at 523–578 folds into the TSP type-1 1 domain; that stretch reads DGGWSGWSAWSDCSRSCGVGVRSSERQCTQPVPKNRGKYCVGERKRSQLCNLPACP. Residue asparagine 622 is glycosylated (N-linked (GlcNAc...) asparagine). Residues 683–794 form a spacer region; the sequence is QTVSRTFKET…PGVHYQYTIQ (112 aa). TSP type-1 domains lie at 804–863, 864–923, and 925–978; these read PEFS…EPCP, PRWW…NRHV, and CPST…QPCQ. Disordered regions lie at residues 1009-1034, 1073-1127, 1140-1237, 1283-1304, and 1317-1384; these read LAPRPSPASSPKPVSISNAIDEEELD, GGWT…GLEQ, EDTP…DVVE, GRDSPLEPGTPTFSSPELSSQH, and TVPT…ARNA. Pro residues predominate over residues 1211–1224; that stretch reads PQSPIPTQPSPPSI. Composition is skewed to polar residues over residues 1293-1304 and 1327-1342; these read PTFSSPELSSQH and PSGQPQTPNLEGTQSP. TSP type-1 domains follow at residues 1366 to 1414, 1417 to 1477, 1479 to 1522, and 1524 to 1584; these read QPSL…SGND, CTLA…CQPG, TKPP…PEPG, and CEES…LCSH. Residues 1587–1627 form the PLAC domain; that stretch reads WPESSRPCATEDCELVEPPRCERDRLSFNFCETLRLLGRCQ.

Interacts with COMP. It depends on Zn(2+) as a cofactor. Post-translationally, N-glycosylated. Can be O-fucosylated by POFUT2 on a serine or a threonine residue found within the consensus sequence C1-X(2)-(S/T)-C2-G of the TSP type-1 repeat domains where C1 and C2 are the first and second cysteine residue of the repeat, respectively. Fucosylated repeats can then be further glycosylated by the addition of a beta-1,3-glucose residue by the glucosyltransferase, B3GALTL. Fucosylation mediates the efficient secretion of ADAMTS family members. Can also be C-glycosylated with one or two mannose molecules on tryptophan residues within the consensus sequence W-X-X-W of the TPRs. N- and C-glycosylations can also facilitate secretion. O-glycosylated proteoglycan; contains chondroitin sulfate. In terms of processing, may be cleaved by a furin endopeptidase. The precursor is sequentially processed.

Its subcellular location is the secreted. The protein resides in the extracellular space. The protein localises to the extracellular matrix. In terms of biological role, metalloprotease. Was previously shown to degrade COMP. However, a later study found no activity against COMP. This Mus musculus (Mouse) protein is A disintegrin and metalloproteinase with thrombospondin motifs 7 (Adamts7).